We begin with the raw amino-acid sequence, 147 residues long: Large ribosomal subunit protein bL9 (147 aa).

The protein belongs to the bacterial ribosomal protein bL9 family.

In terms of biological role, binds to the 23S rRNA. This Campylobacter jejuni subsp. jejuni serotype O:6 (strain 81116 / NCTC 11828) protein is Large ribosomal subunit protein bL9.